The following is a 314-amino-acid chain: Oxidoreductase NAD-binding domain-containing protein 1 (314 aa).

The signal sequence occupies residues 1–18 (MALVAGSAAYQVLRGVTG). Residues 63-166 (EIISPAKVCG…VGGEFCFDPQ (104 aa)) form the FAD-binding FR-type domain. 180 to 185 (GVGINP) provides a ligand contact to NAD(+).

This chain is Oxidoreductase NAD-binding domain-containing protein 1 (oxnad1), found in Xenopus laevis (African clawed frog).